A 446-amino-acid chain; its full sequence is Nuclear distribution protein PAC1-1 (446 aa).

Residues 9 to 41 form the LisH domain; the sequence is QAEELHKSLIAYLSSINASQSVTTLREELQIGD. Positions 60 to 86 form a coiled coil; sequence ISVVRLQKRILDLESKIASLQAELDSA. WD repeat units lie at residues 112-153, 155-195, 199-239, 242-281, 284-344, 346-385, 390-430, and 432-446; these read SHRG…RTLK, HTRT…ANIR, GHDH…CVKT, TQGD…ARAS, GHEN…IKTL, GHNN…KLVK, AHEH…TGFR, and VIAT…RVFM.

Belongs to the WD repeat LIS1/nudF family. As to quaternary structure, self-associates. Interacts with NDL1 and dynein.

The protein resides in the cytoplasm. The protein localises to the cytoskeleton. Its subcellular location is the spindle pole. Its function is as follows. Positively regulates the activity of the minus-end directed microtubule motor protein dynein. May enhance dynein-mediated microtubule sliding by targeting dynein to the microtubule plus end. Required for nuclear migration during vegetative growth as well as development. Required for retrograde early endosome (EE) transport from the hyphal tip. Required for localization of dynein to the mitotic spindle poles. Recruits additional proteins to the dynein complex at SPBs. This chain is Nuclear distribution protein PAC1-1, found in Uncinocarpus reesii (strain UAMH 1704).